A 380-amino-acid chain; its full sequence is Cytochrome b (380 aa).

4 helical membrane-spanning segments follow: residues 34–54, 78–99, 114–134, and 179–199; these read FGSL…LLAA, WLIR…YLHI, WNTG…GYVL, and FFTL…IHLT. The heme b site is built by histidine 84 and histidine 98. Heme b is bound by residues histidine 183 and histidine 197. Position 202 (histidine 202) interacts with a ubiquinone. Transmembrane regions (helical) follow at residues 227–247, 289–309, 321–341, and 348–368; these read LKDI…ALFS, LGGV…PLLH, FSQL…WVGS, and FIII…ILFP.

Belongs to the cytochrome b family. The cytochrome bc1 complex contains 11 subunits: 3 respiratory subunits (MT-CYB, CYC1 and UQCRFS1), 2 core proteins (UQCRC1 and UQCRC2) and 6 low-molecular weight proteins (UQCRH/QCR6, UQCRB/QCR7, UQCRQ/QCR8, UQCR10/QCR9, UQCR11/QCR10 and a cleavage product of UQCRFS1). This cytochrome bc1 complex then forms a dimer. The cofactor is heme b.

The protein resides in the mitochondrion inner membrane. In terms of biological role, component of the ubiquinol-cytochrome c reductase complex (complex III or cytochrome b-c1 complex) that is part of the mitochondrial respiratory chain. The b-c1 complex mediates electron transfer from ubiquinol to cytochrome c. Contributes to the generation of a proton gradient across the mitochondrial membrane that is then used for ATP synthesis. The chain is Cytochrome b (MT-CYB) from Antigone vipio (White-naped crane).